The sequence spans 340 residues: S-adenosylmethionine:tRNA ribosyltransferase-isomerase (340 aa).

This sequence belongs to the QueA family. As to quaternary structure, monomer.

It localises to the cytoplasm. The enzyme catalyses 7-aminomethyl-7-carbaguanosine(34) in tRNA + S-adenosyl-L-methionine = epoxyqueuosine(34) in tRNA + adenine + L-methionine + 2 H(+). It functions in the pathway tRNA modification; tRNA-queuosine biosynthesis. In terms of biological role, transfers and isomerizes the ribose moiety from AdoMet to the 7-aminomethyl group of 7-deazaguanine (preQ1-tRNA) to give epoxyqueuosine (oQ-tRNA). This Francisella tularensis subsp. tularensis (strain FSC 198) protein is S-adenosylmethionine:tRNA ribosyltransferase-isomerase.